A 517-amino-acid chain; its full sequence is Crotonobetaine/carnitine--CoA ligase (517 aa).

Belongs to the ATP-dependent AMP-binding enzyme family.

The catalysed reaction is 4-(trimethylamino)butanoate + ATP + CoA = 4-(trimethylamino)butanoyl-CoA + AMP + diphosphate. It catalyses the reaction crotonobetaine + ATP + CoA = crotonobetainyl-CoA + AMP + diphosphate. The enzyme catalyses (R)-carnitine + ATP + CoA = (R)-carnitinyl-CoA + AMP + diphosphate. Its pathway is amine and polyamine metabolism; carnitine metabolism. In terms of biological role, catalyzes the transfer of CoA to carnitine, generating the initial carnitinyl-CoA needed for the CaiB reaction cycle. Also has activity toward crotonobetaine and gamma-butyrobetaine. The polypeptide is Crotonobetaine/carnitine--CoA ligase (Escherichia coli O8 (strain IAI1)).